Here is a 109-residue protein sequence, read N- to C-terminus: Fluoride-specific ion channel FluC 1 (109 aa).

3 helical membrane passes run 21-41, 52-72, and 83-103; these read FYFK…GFFI, ILFS…HFLY, and LFIY…IGFQ.

It belongs to the fluoride channel Fluc/FEX (TC 1.A.43) family.

The protein localises to the cell inner membrane. It carries out the reaction fluoride(in) = fluoride(out). Functionally, fluoride-specific ion channel. Important for reducing fluoride concentration in the cell, thus reducing its toxicity. In Prochlorococcus marinus subsp. pastoris (strain CCMP1986 / NIES-2087 / MED4), this protein is Fluoride-specific ion channel FluC 1.